The following is a 180-amino-acid chain: Diphosphoinositol polyphosphate phosphohydrolase 2 (180 aa).

An N-acetylmethionine modification is found at Met1. Substrate-binding positions include Arg10, 18–20 (KKR), and 39–41 (SSR). One can recognise a Nudix hydrolase domain in the interval 18 to 144 (KKRAACLCFR…VHAEYLEKLK (127 aa)). Residues Gly50 and Glu66 each contribute to the Mg(2+) site. Residues 51 to 72 (GGMEPEEEPGGAAVREVYEEAG) carry the Nudix box motif. The active-site Proton acceptor is the Glu69. Glu70 lines the Mg(2+) pocket. Substrate is bound by residues 89–91 (RKH), Arg115, and Lys133.

It belongs to the Nudix hydrolase family. DIPP subfamily. Mg(2+) is required as a cofactor. The cofactor is Mn(2+). In terms of tissue distribution, expressed in heart and, at lower level in skeletal muscle, pancreas and kidney.

The protein localises to the cytoplasm. It carries out the reaction diphospho-myo-inositol polyphosphate + H2O = myo-inositol polyphosphate + phosphate.. It catalyses the reaction 5-diphospho-1D-myo-inositol 1,2,3,4,6-pentakisphosphate + H2O = 1D-myo-inositol hexakisphosphate + phosphate + H(+). The catalysed reaction is 3,5-bis(diphospho)-1D-myo-inositol 1,2,4,6-tetrakisphosphate + H2O = 3-diphospho-1D-myo-inositol 1,2,4,5,6-pentakisphosphate + phosphate + 2 H(+). The enzyme catalyses 5-diphospho-1D-myo-inositol 1,3,4,6-tetrakisphosphate + H2O = 1D-myo-inositol 1,3,4,5,6-pentakisphosphate + phosphate + H(+). It carries out the reaction P(1),P(6)-bis(5'-adenosyl) hexaphosphate + H2O = 2 ATP + 2 H(+). It catalyses the reaction P(1),P(5)-bis(5'-adenosyl) pentaphosphate + H2O = ADP + ATP + 2 H(+). The catalysed reaction is 5-phospho-alpha-D-ribose 1-diphosphate + H2O = alpha-D-ribose 1,5-bisphosphate + phosphate + H(+). Its function is as follows. Cleaves the beta-phosphate from diphosphoinositol polyphosphates such as PP-InsP5 (diphosphoinositol pentakisphosphate), PP-InsP4 (diphosphoinositol tetrakisphosphate) and [PP]2-InsP4 (bisdiphosphoinositol tetrakisphosphate), suggesting that it may play a role in signal transduction. Diadenosine polyphosphates, particularly Ap6A (P(1),P(6)-bis(5a-adenosyl) hexaphosphate) and Ap5A (P(1),P(5)-bis(5'-adenosyl) pentaphosphate) are downstream effectors of a signaling cascade that regulates cardiac KATP channels, can also be substrates, although with lower preference than the diphosphoinositol polyphosphates. Can also catalyze the hydrolysis of 5-phosphoribose 1-diphosphate, generating the glycolytic activator ribose 1,5-bisphosphate. Does not play a role in U8 snoRNA decapping activity. Binds U8 snoRNA. The protein is Diphosphoinositol polyphosphate phosphohydrolase 2 of Homo sapiens (Human).